We begin with the raw amino-acid sequence, 198 residues long: 5'-deoxynucleotidase hdd1 (198 aa).

In terms of domain architecture, HD spans 38 to 144 (IADHMYRMGI…VKDIDKFEMI (107 aa)). Residues His-41, His-69, Asp-70, Glu-73, Asp-78, Ile-79, and Asp-139 each coordinate a divalent metal cation.

Belongs to the HDDC2 family. Homodimer. It depends on Mn(2+) as a cofactor. The cofactor is Co(2+). Mg(2+) is required as a cofactor.

It is found in the cytoplasm. It localises to the nucleus. It carries out the reaction a 2'-deoxyribonucleoside 5'-phosphate + H2O = a 2'-deoxyribonucleoside + phosphate. Catalyzes the dephosphorylation of the nucleoside 5'-monophosphates deoxyadenosine monophosphate (dAMP), deoxycytidine monophosphate (dCMP), deoxyguanosine monophosphate (dGMP) and deoxythymidine monophosphate (dTMP). This is 5'-deoxynucleotidase hdd1 from Schizosaccharomyces pombe (strain 972 / ATCC 24843) (Fission yeast).